Here is a 437-residue protein sequence, read N- to C-terminus: Adenosylhomocysteinase (437 aa).

Residues T54, D125, and E170 each coordinate substrate. 171-173 (TTT) serves as a coordination point for NAD(+). 2 residues coordinate substrate: K200 and D204. Residues N205, 234–239 (GYGWVG), E258, N293, 314–316 (AGH), and N361 contribute to the NAD(+) site.

The protein belongs to the adenosylhomocysteinase family. It depends on NAD(+) as a cofactor.

Its subcellular location is the cytoplasm. The catalysed reaction is S-adenosyl-L-homocysteine + H2O = L-homocysteine + adenosine. It participates in amino-acid biosynthesis; L-homocysteine biosynthesis; L-homocysteine from S-adenosyl-L-homocysteine: step 1/1. Functionally, may play a key role in the regulation of the intracellular concentration of adenosylhomocysteine. In Pyrobaculum aerophilum (strain ATCC 51768 / DSM 7523 / JCM 9630 / CIP 104966 / NBRC 100827 / IM2), this protein is Adenosylhomocysteinase.